The sequence spans 373 residues: Nuclear migration protein JNM1 (373 aa).

The tract at residues Glu-33–Leu-53 is disordered. At Ser-91 the chain carries Phosphoserine. Coiled-coil stretches lie at residues Lys-114–Glu-139, Glu-200–Asn-245, and Trp-331–Ala-367.

In terms of assembly, component of the dynactin complex composed of at least ARP1, JNM1, NIP100 and ARP10. Dynactin comprises a short rod of ARP1 polymers attached to ARP10 at its pointed-end and probably associated with the capping protein at its barbed-end. The rod structure is implicated in dynein cargo binding. A sidearm formed by NIP100 projects from the ARP1 filament and is implicated in motor binding. Interacts with ARP1.

The protein resides in the cytoplasm. The protein localises to the cytoskeleton. Functionally, component of the dynactin complex which assists cytoplasmic dynein by increasing its processivity and by regulation of its cargo binding. The dynactin complex is required for the spindle translocation late in anaphase and is involved in a cell wall synthesis checkpoint. JNM1 is associated with the rod and links it to the projecting sidearm. Required for proper nuclear migration during the mitotic cell cycle and for astral microtubule development. This chain is Nuclear migration protein JNM1 (JNM1), found in Saccharomyces cerevisiae (strain ATCC 204508 / S288c) (Baker's yeast).